We begin with the raw amino-acid sequence, 226 residues long: ATP synthase F(0) complex subunit a (226 aa).

The next 5 helical transmembrane spans lie at 9–29, 68–88, 97–117, 138–158, and 184–204; these read FITP…FPSL, WTLM…LGLL, QLSM…ITGF, IPML…ALAV, and ISPT…ILEF.

It belongs to the ATPase A chain family. In terms of assembly, component of the ATP synthase complex composed at least of ATP5F1A/subunit alpha, ATP5F1B/subunit beta, ATP5MC1/subunit c (homooctomer), MT-ATP6/subunit a, MT-ATP8/subunit 8, ATP5ME/subunit e, ATP5MF/subunit f, ATP5MG/subunit g, ATP5MK/subunit k, ATP5MJ/subunit j, ATP5F1C/subunit gamma, ATP5F1D/subunit delta, ATP5F1E/subunit epsilon, ATP5PF/subunit F6, ATP5PB/subunit b, ATP5PD/subunit d, ATP5PO/subunit OSCP. ATP synthase complex consists of a soluble F(1) head domain (subunits alpha(3) and beta(3)) - the catalytic core - and a membrane F(0) domain - the membrane proton channel (subunits c, a, 8, e, f, g, k and j). These two domains are linked by a central stalk (subunits gamma, delta, and epsilon) rotating inside the F1 region and a stationary peripheral stalk (subunits F6, b, d, and OSCP). Interacts with DNAJC30; interaction is direct.

It localises to the mitochondrion inner membrane. The enzyme catalyses H(+)(in) = H(+)(out). Its function is as follows. Subunit a, of the mitochondrial membrane ATP synthase complex (F(1)F(0) ATP synthase or Complex V) that produces ATP from ADP in the presence of a proton gradient across the membrane which is generated by electron transport complexes of the respiratory chain. ATP synthase complex consist of a soluble F(1) head domain - the catalytic core - and a membrane F(1) domain - the membrane proton channel. These two domains are linked by a central stalk rotating inside the F(1) region and a stationary peripheral stalk. During catalysis, ATP synthesis in the catalytic domain of F(1) is coupled via a rotary mechanism of the central stalk subunits to proton translocation. With the subunit c (ATP5MC1), forms the proton-conducting channel in the F(0) domain, that contains two crucial half-channels (inlet and outlet) that facilitate proton movement from the mitochondrial intermembrane space (IMS) into the matrix. Protons are taken up via the inlet half-channel and released through the outlet half-channel, following a Grotthuss mechanism. In Capra hircus (Goat), this protein is ATP synthase F(0) complex subunit a.